The primary structure comprises 409 residues: MKTDGGNTWRASHSKPLNTANTMGEPFSHSEYSVHADQSEFYLNELTEHSGQDNPCMNTSRLNTNRYGHPVVHPCPKIHCICTQSNIAAIGSDCTGCVDIAQACKMLRGGLGCTQDPCVKNPHTQCFTDVSNHAMRNVLPLNVSNTEQFPIQIEYANGRNPVLNPMDDLAMRAALLLSKDIDLQNTHILPSTRISIEKNIPVAAGLAGGSADAAAVLLGINSAWQTNYSRCDLLGKAGALGADVPFLIWGGAAYGSGTGSCVTFFETQTLYWVLCFSKHPLSTRKVFQELDRQRSGAGCNHHPVFSNPAECAEMLKKAIKRGPEALAALLHNDLTSAAKMLMPEIAERIKAAERCPGILRAIISGSGPTLALLAEDAEAANRACSILKDTGVICKAVSSPAYSSIYWQT.

Over residues 1–22 (MKTDGGNTWRASHSKPLNTANT) the composition is skewed to polar residues. The interval 1–26 (MKTDGGNTWRASHSKPLNTANTMGEP) is disordered. 201–211 (PVAAGLAGGSA) is an ATP binding site. Residue Asp-243 is part of the active site.

The protein belongs to the GHMP kinase family. IspE subfamily.

It catalyses the reaction 4-CDP-2-C-methyl-D-erythritol + ATP = 4-CDP-2-C-methyl-D-erythritol 2-phosphate + ADP + H(+). It participates in isoprenoid biosynthesis; isopentenyl diphosphate biosynthesis via DXP pathway; isopentenyl diphosphate from 1-deoxy-D-xylulose 5-phosphate: step 3/6. Catalyzes the phosphorylation of the position 2 hydroxy group of 4-diphosphocytidyl-2C-methyl-D-erythritol. This is 4-diphosphocytidyl-2-C-methyl-D-erythritol kinase (ispE) from Tropheryma whipplei (strain Twist) (Whipple's bacillus).